Here is a 151-residue protein sequence, read N- to C-terminus: Deoxyuridine 5'-triphosphate nucleotidohydrolase (151 aa).

Substrate is bound by residues arginine 70 to glycine 72, asparagine 83, leucine 87 to aspartate 89, and methionine 97.

It belongs to the dUTPase family. Mg(2+) serves as cofactor.

The enzyme catalyses dUTP + H2O = dUMP + diphosphate + H(+). It functions in the pathway pyrimidine metabolism; dUMP biosynthesis; dUMP from dCTP (dUTP route): step 2/2. Its function is as follows. This enzyme is involved in nucleotide metabolism: it produces dUMP, the immediate precursor of thymidine nucleotides and it decreases the intracellular concentration of dUTP so that uracil cannot be incorporated into DNA. This is Deoxyuridine 5'-triphosphate nucleotidohydrolase from Sodalis glossinidius (strain morsitans).